The chain runs to 688 residues: DNA-directed RNA polymerase subunit beta' (688 aa).

4 residues coordinate Zn(2+): Cys69, Cys71, Cys87, and Cys90. Mg(2+)-binding residues include Asp493, Asp495, and Asp497.

This sequence belongs to the RNA polymerase beta' chain family. RpoC1 subfamily. As to quaternary structure, in plastids the minimal PEP RNA polymerase catalytic core is composed of four subunits: alpha, beta, beta', and beta''. When a (nuclear-encoded) sigma factor is associated with the core the holoenzyme is formed, which can initiate transcription. Mg(2+) serves as cofactor. Zn(2+) is required as a cofactor.

It localises to the plastid. The protein localises to the chloroplast. It carries out the reaction RNA(n) + a ribonucleoside 5'-triphosphate = RNA(n+1) + diphosphate. Its function is as follows. DNA-dependent RNA polymerase catalyzes the transcription of DNA into RNA using the four ribonucleoside triphosphates as substrates. This is DNA-directed RNA polymerase subunit beta' from Chloranthus spicatus (Chulantree).